A 234-amino-acid polypeptide reads, in one-letter code: Cell adhesion molecule CEACAM15 (234 aa).

The first 32 residues, 1–32 (MGAETMESPSLFLCKGLLLTASLLICWNWSTA), serve as a signal peptide directing secretion. N-linked (GlcNAc...) asparagine glycans are attached at residues N28, N75, N151, and N184. The 81-residue stretch at 146 to 226 (PYLQLNHTRL…NSFSSKKSYP (81 aa)) folds into the Ig-like C2-type domain. Residues C165 and C213 are joined by a disulfide bond.

The protein belongs to the immunoglobulin superfamily. CEA family. Detected in placenta.

This chain is Cell adhesion molecule CEACAM15, found in Mus musculus (Mouse).